A 117-amino-acid polypeptide reads, in one-letter code: Small ribosomal subunit protein bS6 (117 aa).

This sequence belongs to the bacterial ribosomal protein bS6 family.

Binds together with bS18 to 16S ribosomal RNA. This chain is Small ribosomal subunit protein bS6, found in Roseobacter denitrificans (strain ATCC 33942 / OCh 114) (Erythrobacter sp. (strain OCh 114)).